The sequence spans 359 residues: Chaperone protein DnaJ (359 aa).

The J domain maps to 3-68; the sequence is DYYEILGVPK…ERRQTYDRYG (66 aa). The CR-type zinc finger occupies 128-205; the sequence is GVSKDIKYKI…CAGKGFIEEQ (78 aa). Residues C141, C144, C157, C160, C179, C182, C193, and C196 each coordinate Zn(2+). CXXCXGXG motif repeat units follow at residues 141 to 148, 157 to 164, 179 to 186, and 193 to 200; these read CKTCDGTG, CPYCGGSG, CPFCKGSG, and CHDCAGKG.

The protein belongs to the DnaJ family. Homodimer. It depends on Zn(2+) as a cofactor.

The protein localises to the cytoplasm. Participates actively in the response to hyperosmotic and heat shock by preventing the aggregation of stress-denatured proteins and by disaggregating proteins, also in an autonomous, DnaK-independent fashion. Unfolded proteins bind initially to DnaJ; upon interaction with the DnaJ-bound protein, DnaK hydrolyzes its bound ATP, resulting in the formation of a stable complex. GrpE releases ADP from DnaK; ATP binding to DnaK triggers the release of the substrate protein, thus completing the reaction cycle. Several rounds of ATP-dependent interactions between DnaJ, DnaK and GrpE are required for fully efficient folding. Also involved, together with DnaK and GrpE, in the DNA replication of plasmids through activation of initiation proteins. In Campylobacter hominis (strain ATCC BAA-381 / DSM 21671 / CCUG 45161 / LMG 19568 / NCTC 13146 / CH001A), this protein is Chaperone protein DnaJ.